Reading from the N-terminus, the 203-residue chain is Small ribosomal subunit protein uS4 (203 aa).

One can recognise an S4 RNA-binding domain in the interval 93–156 (RRLDNVVYRL…LKVPAILEAV (64 aa)).

It belongs to the universal ribosomal protein uS4 family. In terms of assembly, part of the 30S ribosomal subunit. Contacts protein S5. The interaction surface between S4 and S5 is involved in control of translational fidelity.

In terms of biological role, one of the primary rRNA binding proteins, it binds directly to 16S rRNA where it nucleates assembly of the body of the 30S subunit. Its function is as follows. With S5 and S12 plays an important role in translational accuracy. This Streptococcus gordonii (strain Challis / ATCC 35105 / BCRC 15272 / CH1 / DL1 / V288) protein is Small ribosomal subunit protein uS4.